The following is a 104-amino-acid chain: Large ribosomal subunit protein uL24 (104 aa).

This sequence belongs to the universal ribosomal protein uL24 family. In terms of assembly, part of the 50S ribosomal subunit.

Its function is as follows. One of two assembly initiator proteins, it binds directly to the 5'-end of the 23S rRNA, where it nucleates assembly of the 50S subunit. One of the proteins that surrounds the polypeptide exit tunnel on the outside of the subunit. The polypeptide is Large ribosomal subunit protein uL24 (Shewanella piezotolerans (strain WP3 / JCM 13877)).